The chain runs to 342 residues: Selenide, water dikinase (342 aa).

Cys13 is a catalytic residue. ATP-binding positions include Lys16 and 44-46 (SCD). Asp47 serves as a coordination point for Mg(2+). ATP is bound by residues Asp64, Asp87, and 134–136 (GHS). Asp87 provides a ligand contact to Mg(2+). Asp222 is a binding site for Mg(2+).

It belongs to the selenophosphate synthase 1 family. Class I subfamily. Homodimer. Requires Mg(2+) as cofactor.

It carries out the reaction hydrogenselenide + ATP + H2O = selenophosphate + AMP + phosphate + 2 H(+). Its function is as follows. Synthesizes selenophosphate from selenide and ATP. In Agathobacter rectalis (strain ATCC 33656 / DSM 3377 / JCM 17463 / KCTC 5835 / VPI 0990) (Eubacterium rectale), this protein is Selenide, water dikinase.